A 236-amino-acid polypeptide reads, in one-letter code: Ubiquinone biosynthesis O-methyltransferase (236 aa).

Residues R39, G59, D80, and M124 each contribute to the S-adenosyl-L-methionine site.

It belongs to the methyltransferase superfamily. UbiG/COQ3 family.

It carries out the reaction a 3-demethylubiquinol + S-adenosyl-L-methionine = a ubiquinol + S-adenosyl-L-homocysteine + H(+). The enzyme catalyses a 3-(all-trans-polyprenyl)benzene-1,2-diol + S-adenosyl-L-methionine = a 2-methoxy-6-(all-trans-polyprenyl)phenol + S-adenosyl-L-homocysteine + H(+). It participates in cofactor biosynthesis; ubiquinone biosynthesis. Its function is as follows. O-methyltransferase that catalyzes the 2 O-methylation steps in the ubiquinone biosynthetic pathway. The protein is Ubiquinone biosynthesis O-methyltransferase of Shewanella sp. (strain ANA-3).